A 132-amino-acid chain; its full sequence is Large-conductance mechanosensitive channel (132 aa).

Helical transmembrane passes span 14–34 (VVDLAVGVVIGAAFGKIVSSL), 38–58 (IITPLLGMVLGGVNFTDLHFG), and 67–87 (GNFIQTIFDFLIIAASIFMFI).

It belongs to the MscL family. In terms of assembly, homopentamer.

Its subcellular location is the cell membrane. Functionally, channel that opens in response to stretch forces in the membrane lipid bilayer. May participate in the regulation of osmotic pressure changes within the cell. The sequence is that of Large-conductance mechanosensitive channel from Bacillus cereus (strain G9842).